The primary structure comprises 219 residues: uncharacterized protein (219 aa).

The span at 1 to 17 (MIINNQNSPQSINTPSS) shows a compositional bias: low complexity. A disordered region spans residues 1–31 (MIINNQNSPQSINTPSSVSSRQHINKSKKKK). The next 2 membrane-spanning stretches (helical) occupy residues 49-69 (SLAT…LVCK) and 83-105 (LVYR…SYIG). The segment at 135 to 219 (NHRSPIPLTN…NSDLEIPIPI (85 aa)) is disordered. A compositionally biased stretch (low complexity) spans 144–212 (NLNNNNNNNN…SNNNNDNNSD (69 aa)).

Its subcellular location is the membrane. This is an uncharacterized protein from Dictyostelium discoideum (Social amoeba).